Here is a 769-residue protein sequence, read N- to C-terminus: Calcium up-regulated protein B (769 aa).

The interval 1–22 (MINIEDISKSSNQSEEKQLKST) is disordered. Ricin B-type lectin domains follow at residues 25–145 (KPKY…WTTF) and 158–296 (FQSK…WITN).

This sequence belongs to the cup family.

The protein localises to the cytoplasm. The protein resides in the membrane. Its function is as follows. May play an important role in stabilizing and/or regulating the cell membrane during Ca(2+) stress or certain stages of development. The polypeptide is Calcium up-regulated protein B (cupB) (Dictyostelium discoideum (Social amoeba)).